Consider the following 450-residue polypeptide: Putative nucleolar protein 5-3 (450 aa).

Positions 252-370 (IAPNLTALVG…LEARLRNLEG (119 aa)) constitute a Nop domain. The tract at residues 375 to 423 (ACEEEEEVNDKDTKKEADDEEEPKTEECSKKRKKEAELETVEDPAKKSK) is disordered. Positions 399–423 (TEECSKKRKKEAELETVEDPAKKSK) are enriched in basic and acidic residues.

This sequence belongs to the NOP5/NOP56 family.

Its subcellular location is the nucleus. The protein resides in the nucleolus. Functionally, required for 60S ribosomal subunit biogenesis. In Arabidopsis thaliana (Mouse-ear cress), this protein is Putative nucleolar protein 5-3 (NOP5-3).